The chain runs to 592 residues: Alanine aminotransferase, mitochondrial (592 aa).

The N-terminal 64 residues, 1–64 (MLSLSAKNHF…RKVRPVLQRH (64 aa)), are a transit peptide targeting the mitochondrion. A Phosphoserine modification is found at Ser77. Residues Ala258, Ser259, Tyr284, Asn340, and Ser409 each coordinate pyridoxal 5'-phosphate. An N6-(pyridoxal phosphate)lysine modification is found at Lys412. Pyridoxal 5'-phosphate is bound at residue Arg421.

The protein belongs to the class-I pyridoxal-phosphate-dependent aminotransferase family. Alanine aminotransferase subfamily. As to quaternary structure, homodimer. It depends on pyridoxal 5'-phosphate as a cofactor.

It localises to the mitochondrion matrix. The catalysed reaction is L-alanine + 2-oxoglutarate = pyruvate + L-glutamate. It participates in amino-acid degradation; L-alanine degradation via transaminase pathway; pyruvate from L-alanine: step 1/1. Its function is as follows. Alanine aminotransferase involved in both alanine biosynthesis and utilization. Under respiratory conditions, constitutes the sole pathway for alanine biosynthesis and catabolism. Under fermentative conditions, it plays a catabolic role and alanine is mainly synthesized through an alternative pathway. In Saccharomyces cerevisiae (strain ATCC 204508 / S288c) (Baker's yeast), this protein is Alanine aminotransferase, mitochondrial (ALT1).